A 502-amino-acid chain; its full sequence is Lysine--tRNA ligase (502 aa).

Residues E413 and E420 each contribute to the Mg(2+) site.

The protein belongs to the class-II aminoacyl-tRNA synthetase family. In terms of assembly, homodimer. Requires Mg(2+) as cofactor.

It localises to the cytoplasm. The enzyme catalyses tRNA(Lys) + L-lysine + ATP = L-lysyl-tRNA(Lys) + AMP + diphosphate. This chain is Lysine--tRNA ligase (lysS), found in Haemophilus influenzae (strain ATCC 51907 / DSM 11121 / KW20 / Rd).